The sequence spans 272 residues: Putative pyruvate, phosphate dikinase regulatory protein (272 aa).

Residue 154–161 (GVSRTSKS) participates in ADP binding.

It belongs to the pyruvate, phosphate/water dikinase regulatory protein family. PDRP subfamily.

The catalysed reaction is N(tele)-phospho-L-histidyl/L-threonyl-[pyruvate, phosphate dikinase] + ADP = N(tele)-phospho-L-histidyl/O-phospho-L-threonyl-[pyruvate, phosphate dikinase] + AMP + H(+). The enzyme catalyses N(tele)-phospho-L-histidyl/O-phospho-L-threonyl-[pyruvate, phosphate dikinase] + phosphate + H(+) = N(tele)-phospho-L-histidyl/L-threonyl-[pyruvate, phosphate dikinase] + diphosphate. Bifunctional serine/threonine kinase and phosphorylase involved in the regulation of the pyruvate, phosphate dikinase (PPDK) by catalyzing its phosphorylation/dephosphorylation. This is Putative pyruvate, phosphate dikinase regulatory protein from Wolbachia sp. subsp. Brugia malayi (strain TRS).